We begin with the raw amino-acid sequence, 446 residues long: Methylenetetrahydrofolate--tRNA-(uracil-5-)-methyltransferase TrmFO (446 aa).

11–16 (GGGLAG) contributes to the FAD binding site.

Belongs to the MnmG family. TrmFO subfamily. FAD serves as cofactor.

Its subcellular location is the cytoplasm. It carries out the reaction uridine(54) in tRNA + (6R)-5,10-methylene-5,6,7,8-tetrahydrofolate + NADH + H(+) = 5-methyluridine(54) in tRNA + (6S)-5,6,7,8-tetrahydrofolate + NAD(+). The enzyme catalyses uridine(54) in tRNA + (6R)-5,10-methylene-5,6,7,8-tetrahydrofolate + NADPH + H(+) = 5-methyluridine(54) in tRNA + (6S)-5,6,7,8-tetrahydrofolate + NADP(+). Functionally, catalyzes the folate-dependent formation of 5-methyl-uridine at position 54 (M-5-U54) in all tRNAs. This Oleidesulfovibrio alaskensis (strain ATCC BAA-1058 / DSM 17464 / G20) (Desulfovibrio alaskensis) protein is Methylenetetrahydrofolate--tRNA-(uracil-5-)-methyltransferase TrmFO.